We begin with the raw amino-acid sequence, 186 residues long: Protein FAM9B (186 aa).

The interval 1–93 is disordered; sequence MAAWGKKHAG…KHALRKKQLK (93 aa). Basic and acidic residues-rich tracts occupy residues 10–27 and 34–58; these read GKDPVRDECEERNRFTET and DEHGEREPFAETDEHTGANTKKPED. A compositionally biased stretch (basic residues) spans 66-93; that stretch reads KRKRMKMDKTCSKTKNKSKHALRKKQLK.

This sequence belongs to the XLR/SYCP3 family. As to expression, expressed in testis and ovary (at protein level).

It is found in the nucleus. It localises to the cytoplasm. The protein localises to the chromosome. May play a role in meiosis. This Homo sapiens (Human) protein is Protein FAM9B.